The following is a 214-amino-acid chain: Alpha-S1-casein (214 aa).

A signal peptide spans 1–15; that stretch reads MKLLILTCLVAVALA. The disordered stretch occupies residues 59 to 91; that stretch reads IGSESTEDQAMEDAKQMKAGSSSSSEEIVPNSA. Phosphoserine occurs at positions 61, 63, 79, 80, 81, 82, 83, 90, and 130.

Belongs to the alpha-casein family. Mammary gland specific. Secreted in milk.

The protein localises to the secreted. Its function is as follows. Important role in the capacity of milk to transport calcium phosphate. This Capra hircus (Goat) protein is Alpha-S1-casein (CSN1S1).